The primary structure comprises 226 residues: Ribonuclease 3 (226 aa).

The RNase III domain maps to 7-129 (LPRLCRTLSY…IIGAVYLDSD (123 aa)). Glu-42 contributes to the Mg(2+) binding site. The active site involves Asp-46. Mg(2+) is bound by residues Asp-115 and Glu-118. Glu-118 is a catalytic residue. The DRBM domain occupies 156 to 226 (DAKTLLQEHL…AAQVLELLKK (71 aa)).

This sequence belongs to the ribonuclease III family. In terms of assembly, homodimer. Requires Mg(2+) as cofactor.

Its subcellular location is the cytoplasm. The catalysed reaction is Endonucleolytic cleavage to 5'-phosphomonoester.. Its function is as follows. Digests double-stranded RNA. Involved in the processing of primary rRNA transcript to yield the immediate precursors to the large and small rRNAs (23S and 16S). Processes some mRNAs, and tRNAs when they are encoded in the rRNA operon. Processes pre-crRNA and tracrRNA of type II CRISPR loci if present in the organism. The sequence is that of Ribonuclease 3 from Shewanella baltica (strain OS223).